The primary structure comprises 185 residues: Neuronal vesicle trafficking-associated protein 1 (185 aa).

Residues 1 to 82 (MVKLGNNFAE…ITEGVTERFK (82 aa)) are Cytoplasmic-facing. The helical; Signal-anchor for type II membrane protein transmembrane segment at 83–103 (VSVLVLFALAFLTCVVFLVVY) threads the bilayer. Topologically, residues 104-185 (KVYKYDRACP…QETEAAEKSA (82 aa)) are lumenal. The interval 129–164 (ESYYAEQDSSAREKFYTVINHYNLAKQSITRSVSPW) is required for GRIP1 interaction.

It belongs to the NSG family. In terms of assembly, forms a complex with GRIP1, GRIA2 and STX12 through direct interaction with GRIP1; controls the intracellular fate of AMPAR and the endosomal sorting of the GRIA2 subunit toward recycling and membrane targeting. Interacts with STX12. Interacts with APP; could regulate APP processing. Interacts with FAM171A1.

The protein resides in the membrane. It localises to the golgi apparatus. Its subcellular location is the trans-Golgi network membrane. It is found in the endosome membrane. The protein localises to the cell projection. The protein resides in the dendrite. It localises to the early endosome membrane. Its subcellular location is the late endosome membrane. It is found in the lysosome lumen. The protein localises to the recycling endosome membrane. The protein resides in the cytoplasmic vesicle membrane. It localises to the golgi stack membrane. Its subcellular location is the endosome. It is found in the multivesicular body membrane. The protein localises to the endoplasmic reticulum membrane. Its function is as follows. Plays a role in the recycling mechanism in neurons of multiple receptors, including AMPAR, APP and L1CAM and acts at the level of early endosomes to promote sorting of receptors toward a recycling pathway. Regulates sorting and recycling of GRIA2 through interaction with GRIP1 and then contributes to the regulation of synaptic transmission and plasticity by affecting the recycling and targeting of AMPA receptors to the synapse. Is required for faithful sorting of L1CAM to axons by facilitating trafficking from somatodendritic early endosome or the recycling endosome. In an other hand, induces apoptosis via the activation of CASP3 in response to DNA damage. The sequence is that of Neuronal vesicle trafficking-associated protein 1 from Macaca fascicularis (Crab-eating macaque).